The sequence spans 234 residues: MSLLAQLDRRIRYYGGLIVSCQPVPGSPLDNPAIVAAMALAAEQAGAVALRIEGLANLQAVRPLVTVPVIALIKRDLHDSPVRITPWLEDVNALAQAGADIIAVDGTRRQRPASVASLLAAIHRQGKNAMADCSSLDDALECWQLGFDMVGTTLSGYTAEGTPVEPDLALVKSLSAAGCRVVAEGRYNTPAQAAEAMRCGAWAVTVGSAITRLEHICGWYNSALKAAVCPANEQ.

Belongs to the NanE family.

The catalysed reaction is an N-acyl-D-glucosamine 6-phosphate = an N-acyl-D-mannosamine 6-phosphate. The protein operates within amino-sugar metabolism; N-acetylneuraminate degradation; D-fructose 6-phosphate from N-acetylneuraminate: step 3/5. Functionally, converts N-acetylmannosamine-6-phosphate (ManNAc-6-P) to N-acetylglucosamine-6-phosphate (GlcNAc-6-P). In Klebsiella pneumoniae (strain 342), this protein is Putative N-acetylmannosamine-6-phosphate 2-epimerase.